The following is a 327-amino-acid chain: GMP reductase (327 aa).

Catalysis depends on cysteine 176, which acts as the Thioimidate intermediate. Residue 205-228 coordinates NADP(+); the sequence is IIADGGIRTHGDIAKSIRFGASMV.

It belongs to the IMPDH/GMPR family. GuaC type 2 subfamily.

The catalysed reaction is IMP + NH4(+) + NADP(+) = GMP + NADPH + 2 H(+). Its function is as follows. Catalyzes the irreversible NADPH-dependent deamination of GMP to IMP. It functions in the conversion of nucleobase, nucleoside and nucleotide derivatives of G to A nucleotides, and in maintaining the intracellular balance of A and G nucleotides. This Streptococcus pyogenes serotype M28 (strain MGAS6180) protein is GMP reductase.